The primary structure comprises 259 residues: Type III pantothenate kinase (259 aa).

6–13 (DVGNTNCT) lines the ATP pocket. Substrate is bound at residue 107–110 (GSDR). Aspartate 109 acts as the Proton acceptor in catalysis. Aspartate 129 is a binding site for K(+). Threonine 132 contacts ATP. Threonine 184 contacts substrate.

The protein belongs to the type III pantothenate kinase family. In terms of assembly, homodimer. NH4(+) is required as a cofactor. Requires K(+) as cofactor.

The protein localises to the cytoplasm. The catalysed reaction is (R)-pantothenate + ATP = (R)-4'-phosphopantothenate + ADP + H(+). It participates in cofactor biosynthesis; coenzyme A biosynthesis; CoA from (R)-pantothenate: step 1/5. Functionally, catalyzes the phosphorylation of pantothenate (Pan), the first step in CoA biosynthesis. This Listeria welshimeri serovar 6b (strain ATCC 35897 / DSM 20650 / CCUG 15529 / CIP 8149 / NCTC 11857 / SLCC 5334 / V8) protein is Type III pantothenate kinase.